Here is a 273-residue protein sequence, read N- to C-terminus: Vacuolar iron transporter (273 aa).

Residues 1–47 (MVSKKTIEARKAYYNEDVVLSKEAHDFYHNLDKHGENHNLDKDNLKT) are Cytoplasmic-facing. The chain crosses the membrane as a helical span at residues 48–68 (IIFGSLDGIITIFAIVSGCVG). Residues 69–75 (AKITPTQ) are Vacuolar-facing. A helical membrane pass occupies residues 76-96 (VIIIGIGNLFANAISMGFSEY). Over 97-181 (TSSTAQRDFM…NEDKNECLKK (85 aa)) the chain is Cytoplasmic. Fe cation-binding residues include E113, E116, E124, E127, M161, and E165. The chain crosses the membrane as a helical span at residues 182 to 202 (GIIMFLSFAVFGIIPLSAYVA). Residues 203-212 (YTVFFGYTDY) are Vacuolar-facing. A helical membrane pass occupies residues 213–233 (TTSFLVVFISTLTTLFILGLF). The Cytoplasmic portion of the chain corresponds to 234–246 (KSQFTNQKPITCA). Residues 247 to 267 (LYMVLNGMIAGMVPFLLGVVL) traverse the membrane as a helical segment. The Vacuolar segment spans residues 268-273 (KNNISE).

The protein belongs to the CCC1 family. In terms of assembly, monomer.

Its subcellular location is the vacuole membrane. The protein resides in the endoplasmic reticulum membrane. It is found in the cytoplasmic vesicle membrane. The enzyme catalyses Fe(2+)(in) = Fe(2+)(out). Its function is as follows. Vacuolar iron transporter involved in the transfer of iron ions from the cytosol to the vacuole for intracellular iron storage. Involved in detoxification of excess iron. The transport mechanism is not well defined and the role of protons is not clear. The protein is Vacuolar iron transporter of Plasmodium falciparum (isolate 3D7).